Reading from the N-terminus, the 931-residue chain is Isoleucine--tRNA ligase (931 aa).

A 'HIGH' region motif is present at residues 57-67 (PYANGNIHIGH). An L-isoleucyl-5'-AMP-binding site is contributed by E555. The short motif at 596–600 (KMSKS) is the 'KMSKS' region element. Residue K599 coordinates ATP. The Zn(2+) site is built by C890, C893, C910, and C913.

This sequence belongs to the class-I aminoacyl-tRNA synthetase family. IleS type 1 subfamily. In terms of assembly, monomer. Requires Zn(2+) as cofactor.

It is found in the cytoplasm. The catalysed reaction is tRNA(Ile) + L-isoleucine + ATP = L-isoleucyl-tRNA(Ile) + AMP + diphosphate. Its function is as follows. Catalyzes the attachment of isoleucine to tRNA(Ile). As IleRS can inadvertently accommodate and process structurally similar amino acids such as valine, to avoid such errors it has two additional distinct tRNA(Ile)-dependent editing activities. One activity is designated as 'pretransfer' editing and involves the hydrolysis of activated Val-AMP. The other activity is designated 'posttransfer' editing and involves deacylation of mischarged Val-tRNA(Ile). The chain is Isoleucine--tRNA ligase from Limosilactobacillus reuteri subsp. reuteri (strain JCM 1112) (Lactobacillus reuteri).